The primary structure comprises 514 residues: Bifunctional NAD(P)H-hydrate repair enzyme Nnr (514 aa).

Residues 1 to 218 (MKLVTSEEIK…IPIEIVNDIV (218 aa)) form an NAD(P)H-hydrate epimerase region. Positions 9–215 (IKRLEERLER…RLGIPIEIVN (207 aa)) constitute a YjeF N-terminal domain. Residues 59-63 (NNGGD) form an NADPHX 1; for epimerase activity region. K(+) is bound by residues N60 and D125. The NADPHX 1; for epimerase activity stretch occupies residues 129–135 (GIGLKRE). D158 contacts (6S)-NADPHX. Residue S161 participates in K(+) binding. Positions 226-508 (DWELLKDIVR…KILPLAIDEV (283 aa)) constitute a YjeF C-terminal domain. Residues 226–514 (DWELLKDIVR…IDEVIRRRNV (289 aa)) are ADP-dependent (S)-NAD(P)H-hydrate dehydratase. G333 contacts (6S)-NADPHX. Residues 382–388 (HYGEMSR) form an NADPHX 2; for dehydratase activity region. ADP contacts are provided by residues 419–423 (KGPNS) and 439–448 (DFLLATAGSG). D449 provides a ligand contact to (6S)-NADPHX.

The protein in the N-terminal section; belongs to the NnrE/AIBP family. In the C-terminal section; belongs to the NnrD/CARKD family. K(+) serves as cofactor.

The catalysed reaction is (6S)-NADHX + ADP = AMP + phosphate + NADH + H(+). It carries out the reaction (6S)-NADPHX + ADP = AMP + phosphate + NADPH + H(+). The enzyme catalyses (6R)-NADHX = (6S)-NADHX. It catalyses the reaction (6R)-NADPHX = (6S)-NADPHX. Its function is as follows. Bifunctional enzyme that catalyzes the epimerization of the S- and R-forms of NAD(P)HX and the dehydration of the S-form of NAD(P)HX at the expense of ADP, which is converted to AMP. This allows the repair of both epimers of NAD(P)HX, a damaged form of NAD(P)H that is a result of enzymatic or heat-dependent hydration. In Dictyoglomus turgidum (strain DSM 6724 / Z-1310), this protein is Bifunctional NAD(P)H-hydrate repair enzyme Nnr (nnr).